The sequence spans 237 residues: Octopine transport system permease protein OccQ (237 aa).

The ABC transmembrane type-1 domain occupies 22–222 (TGMTVAVASS…LITFISGQAF (201 aa)). A run of 4 helical transmembrane segments spans residues 24–44 (MTVAVASSAFTIGLVFGCLGA), 72–92 (LVIYLFYFGSSSLISGVGSLF), 96–116 (GFVSAPAFLTGALAIGLVSAA), and 201–221 (FSFYLTAAALYLLITFISGQA).

It belongs to the binding-protein-dependent transport system permease family. HisMQ subfamily.

It localises to the cell inner membrane. Its function is as follows. Component of the octopine active transport system probably consisting of four subunits: Q, M, P and T. The protein is Octopine transport system permease protein OccQ (occQ) of Rhizobium meliloti (Ensifer meliloti).